A 459-amino-acid polypeptide reads, in one-letter code: Protein BTN1 (459 aa).

11 helical membrane passes run 37-57, 73-93, 102-122, 129-149, 167-187, 189-209, 240-260, 283-303, 325-342, 352-372, and 374-394; these read VSVV…YVLV, AVLL…PYFI, IAVF…APVE, LLGV…FLGL, GAGL…GLGV, GSLL…WGIL, VPAG…AATA, ALFF…YTIN, YYPF…ISRS, LYLP…HAVL, and FIPS…LGGA.

This sequence belongs to the battenin family.

It localises to the vacuole membrane. In terms of biological role, involved in vacuolar transport and vacuole pH homeostasis. Also required for cytokinesis. In Chaetomium globosum (strain ATCC 6205 / CBS 148.51 / DSM 1962 / NBRC 6347 / NRRL 1970) (Soil fungus), this protein is Protein BTN1 (BTN1).